Consider the following 167-residue polypeptide: Small ribosomal subunit protein uS5 (167 aa).

The region spanning 12 to 75 (LQEKLVAVNR…EKARRNIVSV (64 aa)) is the S5 DRBM domain.

The protein belongs to the universal ribosomal protein uS5 family. As to quaternary structure, part of the 30S ribosomal subunit. Contacts proteins S4 and S8.

Functionally, with S4 and S12 plays an important role in translational accuracy. Located at the back of the 30S subunit body where it stabilizes the conformation of the head with respect to the body. The polypeptide is Small ribosomal subunit protein uS5 (Shewanella loihica (strain ATCC BAA-1088 / PV-4)).